A 320-amino-acid polypeptide reads, in one-letter code: Cytosolic Fe-S cluster assembly factor NUBP1 (320 aa).

N-acetylmethionine is present on Met-1. [4Fe-4S] cluster contacts are provided by Cys-8, Cys-22, Cys-25, and Cys-31. Position 62–69 (62–69) interacts with ATP; it reads GKGGVGKS. Positions 235 and 238 each coordinate [4Fe-4S] cluster. Position 319 is a phosphoserine (Ser-319).

Belongs to the Mrp/NBP35 ATP-binding proteins family. NUBP1/NBP35 subfamily. As to quaternary structure, heterotetramer of 2 NUBP1 and 2 NUBP2 chains. Interacts with KIFC1. Interacts with NUBP2. Interacts with the BBS/CCT complex subunit CCT1. The cofactor is [4Fe-4S] cluster.

It localises to the cytoplasm. Its subcellular location is the nucleus. It is found in the cell projection. The protein resides in the cytoskeleton. The protein localises to the cilium axoneme. It localises to the cilium basal body. Its subcellular location is the microtubule organizing center. It is found in the centrosome. The protein resides in the centriole. Component of the cytosolic iron-sulfur (Fe/S) protein assembly (CIA) machinery. Required for maturation of extramitochondrial Fe-S proteins. The NUBP1-NUBP2 heterotetramer forms a Fe-S scaffold complex, mediating the de novo assembly of an Fe-S cluster and its transfer to target apoproteins. Implicated in the regulation of centrosome duplication. Negatively regulates cilium formation and structure. In Homo sapiens (Human), this protein is Cytosolic Fe-S cluster assembly factor NUBP1.